The sequence spans 81 residues: Sulfur carrier protein TusA (81 aa).

Cys19 serves as the catalytic Cysteine persulfide intermediate.

This sequence belongs to the sulfur carrier protein TusA family. As to quaternary structure, interacts with IscS.

The protein resides in the cytoplasm. Its pathway is tRNA modification. Its function is as follows. Sulfur carrier protein involved in sulfur trafficking in the cell. Part of a sulfur-relay system required for 2-thiolation during synthesis of 2-thiouridine of the modified wobble base 5-methylaminomethyl-2-thiouridine (mnm(5)s(2)U) in tRNA. Interacts with IscS and stimulates its cysteine desulfurase activity. Accepts an activated sulfur from IscS, which is then transferred to TusD, and thus determines the direction of sulfur flow from IscS to 2-thiouridine formation. Also appears to be involved in sulfur transfer for the biosynthesis of molybdopterin. The sequence is that of Sulfur carrier protein TusA from Escherichia coli O17:K52:H18 (strain UMN026 / ExPEC).